The chain runs to 427 residues: Adenylosuccinate synthetase (427 aa).

Residues 12 to 18 (GDEGKGK) and 40 to 42 (GHT) each bind GTP. The Proton acceptor role is filled by Asp-13. 2 residues coordinate Mg(2+): Asp-13 and Gly-40. IMP is bound by residues 13–16 (DEGK), 38–41 (NAGH), Thr-128, Arg-142, Gln-223, Thr-238, and Arg-302. His-41 serves as the catalytic Proton donor. 298-304 (TTTGRPR) provides a ligand contact to substrate. Residues Arg-304, 330-332 (SID), and 412-414 (SVG) each bind GTP.

This sequence belongs to the adenylosuccinate synthetase family. As to quaternary structure, homodimer. Requires Mg(2+) as cofactor.

It is found in the cytoplasm. The enzyme catalyses IMP + L-aspartate + GTP = N(6)-(1,2-dicarboxyethyl)-AMP + GDP + phosphate + 2 H(+). Its pathway is purine metabolism; AMP biosynthesis via de novo pathway; AMP from IMP: step 1/2. Plays an important role in the de novo pathway of purine nucleotide biosynthesis. Catalyzes the first committed step in the biosynthesis of AMP from IMP. This Staphylococcus aureus (strain MW2) protein is Adenylosuccinate synthetase.